Reading from the N-terminus, the 94-residue chain is Transcription factor PRE6 (94 aa).

Residues 1–20 form a disordered region; the sequence is MSSRRSSRSRQSGSSRISDD. In terms of domain architecture, bHLH spans 6–60; that stretch reads SSRSRQSGSSRISDDQISDLVSKLQHLIPELRRRRSDKVSASKVLQETCNYIRNL.

The protein belongs to the bHLH protein family. In terms of assembly, interacts with HFR1.

Its subcellular location is the cytoplasm. The protein resides in the nucleus. Functionally, atypical and probable non DNA-binding bHLH transcription factor that regulates light-mediated responses in day light conditions by binding and inhibiting the activity of the bHLH transcription factor HFR1, a critical regulator of light signaling and shade avoidance. Forms non-functional heterodimers with HFR1, causing liberation and activation of PIF4 from the transcriptionally inactive HFR1-PIF4 complex. The sequence is that of Transcription factor PRE6 (PRE6) from Arabidopsis thaliana (Mouse-ear cress).